A 449-amino-acid chain; its full sequence is NADH-quinone oxidoreductase subunit H (449 aa).

9 helical membrane-spanning segments follow: residues 29 to 49 (ILLK…FAIV), 96 to 116 (PIFI…FAVI), 136 to 156 (LPVS…GLIL), 177 to 197 (IISY…YAGT), 211 to 231 (WYIV…GETN), 259 to 279 (FFFL…TTLF), 298 to 318 (WVPL…FIWL), 330 to 350 (FMSF…LAVA), and 365 to 385 (WLVG…IDPG). Residues 393-402 (LEEAEQRKLA) are compositionally biased toward basic and acidic residues. Residues 393 to 449 (LEEAEQRKLAEAPSLDRIPWPPPPQAAGRGRPAVSAGASANGSSTVIPADPGPRQER) form a disordered region. The span at 418–436 (AAGRGRPAVSAGASANGSS) shows a compositional bias: low complexity.

It belongs to the complex I subunit 1 family. In terms of assembly, NDH-1 is composed of 14 different subunits. Subunits NuoA, H, J, K, L, M, N constitute the membrane sector of the complex.

The protein localises to the cell membrane. The catalysed reaction is a quinone + NADH + 5 H(+)(in) = a quinol + NAD(+) + 4 H(+)(out). In terms of biological role, NDH-1 shuttles electrons from NADH, via FMN and iron-sulfur (Fe-S) centers, to quinones in the respiratory chain. The immediate electron acceptor for the enzyme in this species is believed to be ubiquinone. Couples the redox reaction to proton translocation (for every two electrons transferred, four hydrogen ions are translocated across the cytoplasmic membrane), and thus conserves the redox energy in a proton gradient. This subunit may bind ubiquinone. The sequence is that of NADH-quinone oxidoreductase subunit H from Frankia casuarinae (strain DSM 45818 / CECT 9043 / HFP020203 / CcI3).